The sequence spans 375 residues: Tyrosine--tRNA ligase (375 aa).

L-tyrosine is bound by residues tyrosine 37, tyrosine 168, glutamine 172, aspartate 175, and glutamine 190. Residues lysine 251–serine 255 carry the 'KMSKS' region motif. Lysine 254 provides a ligand contact to ATP.

This sequence belongs to the class-I aminoacyl-tRNA synthetase family. TyrS type 4 subfamily. Homodimer.

Its subcellular location is the cytoplasm. It catalyses the reaction tRNA(Tyr) + L-tyrosine + ATP = L-tyrosyl-tRNA(Tyr) + AMP + diphosphate + H(+). Catalyzes the attachment of tyrosine to tRNA(Tyr) in a two-step reaction: tyrosine is first activated by ATP to form Tyr-AMP and then transferred to the acceptor end of tRNA(Tyr). The sequence is that of Tyrosine--tRNA ligase from Pyrococcus abyssi (strain GE5 / Orsay).